Consider the following 401-residue polypeptide: Imidazolonepropionase (401 aa).

Positions 70 and 72 each coordinate Fe(3+). Positions 70 and 72 each coordinate Zn(2+). Positions 79, 142, and 175 each coordinate 4-imidazolone-5-propanoate. N-formimidoyl-L-glutamate is bound at residue Y142. A Fe(3+)-binding site is contributed by H238. H238 contributes to the Zn(2+) binding site. Q241 contacts 4-imidazolone-5-propanoate. D313 provides a ligand contact to Fe(3+). Residue D313 coordinates Zn(2+). Positions 315 and 317 each coordinate N-formimidoyl-L-glutamate. T318 contacts 4-imidazolone-5-propanoate.

It belongs to the metallo-dependent hydrolases superfamily. HutI family. The cofactor is Zn(2+). Fe(3+) serves as cofactor.

It localises to the cytoplasm. The catalysed reaction is 4-imidazolone-5-propanoate + H2O = N-formimidoyl-L-glutamate. Its pathway is amino-acid degradation; L-histidine degradation into L-glutamate; N-formimidoyl-L-glutamate from L-histidine: step 3/3. In terms of biological role, catalyzes the hydrolytic cleavage of the carbon-nitrogen bond in imidazolone-5-propanoate to yield N-formimidoyl-L-glutamate. It is the third step in the universal histidine degradation pathway. In Xanthomonas euvesicatoria pv. vesicatoria (strain 85-10) (Xanthomonas campestris pv. vesicatoria), this protein is Imidazolonepropionase.